The following is a 392-amino-acid chain: Speckle-type POZ protein-like B (392 aa).

One can recognise an MATH domain in the interval 31 to 161 (KFSYMWTINN…DDKLTLFCEV (131 aa)). Positions 200-267 (TDCSLFVGGQ…IYTGKAPNLE (68 aa)) constitute a BTB domain.

This sequence belongs to the Tdpoz family. Homodimer. Heterodimer with SPOP. Component of cullin-RING-based BCR (BTB-CUL3-RBX1) E3 ubiquitin-protein ligase complexes containing homodimeric SPOPL or the heterodimer formed by SPOP and SPOPL.

It is found in the nucleus. The protein operates within protein modification; protein ubiquitination. Its function is as follows. Component of a cullin-RING-based BCR (BTB-CUL3-RBX1) E3 ubiquitin-protein ligase complex that mediates the ubiquitination and subsequent proteasomal degradation of target proteins, but with relatively low efficiency. The polypeptide is Speckle-type POZ protein-like B (spoplb) (Danio rerio (Zebrafish)).